Reading from the N-terminus, the 782-residue chain is uncharacterized protein (782 aa).

The zn(2)-C6 fungal-type DNA-binding region spans 22-50 (CRECHRLKLKCDRVWPCENCKKRGIPNLC). Disordered regions lie at residues 105 to 126 (GEKP…DPDH) and 645 to 665 (VPSS…AEKA). Residues 654-665 (SPDDSSMRAEKA) show a composition bias toward basic and acidic residues.

The protein resides in the nucleus. This is an uncharacterized protein from Schizosaccharomyces pombe (strain 972 / ATCC 24843) (Fission yeast).